Reading from the N-terminus, the 155-residue chain is MLKQVEIFTDGSCLGNPGPGGYGAILRYRGREKTFSAGYTRTTNNRMELMAAIVALEALKEHCEVILSTDSQYVRQGITQWIHSWKKRGWKTADKKPVKNVDLWQRLDAALGQHQIKWEWVKGHAGHPENERCDELARAAAMNPTLEDTGYQVEV.

An RNase H type-1 domain is found at 1–142 (MLKQVEIFTD…CDELARAAAM (142 aa)). Mg(2+) contacts are provided by Asp-10, Glu-48, Asp-70, and Asp-134.

This sequence belongs to the RNase H family. As to quaternary structure, monomer. Mg(2+) serves as cofactor.

Its subcellular location is the cytoplasm. It catalyses the reaction Endonucleolytic cleavage to 5'-phosphomonoester.. Its function is as follows. Endonuclease that specifically degrades the RNA of RNA-DNA hybrids. The sequence is that of Ribonuclease H from Escherichia coli (strain 55989 / EAEC).